We begin with the raw amino-acid sequence, 94 residues long: Co-chaperonin GroES (94 aa).

This sequence belongs to the GroES chaperonin family. In terms of assembly, heptamer of 7 subunits arranged in a ring. Interacts with the chaperonin GroEL.

Its subcellular location is the cytoplasm. Together with the chaperonin GroEL, plays an essential role in assisting protein folding. The GroEL-GroES system forms a nano-cage that allows encapsulation of the non-native substrate proteins and provides a physical environment optimized to promote and accelerate protein folding. GroES binds to the apical surface of the GroEL ring, thereby capping the opening of the GroEL channel. This chain is Co-chaperonin GroES, found in Clostridium novyi (strain NT).